The following is an 84-amino-acid chain: UPF0291 protein EUBELI_00985 (84 aa).

The protein belongs to the UPF0291 family.

The protein resides in the cytoplasm. The sequence is that of UPF0291 protein EUBELI_00985 from Lachnospira eligens (strain ATCC 27750 / DSM 3376 / VPI C15-48 / C15-B4) (Eubacterium eligens).